The following is a 385-amino-acid chain: Cytochrome b (385 aa).

The next 4 helical transmembrane spans lie at 32 to 52 (LGSL…FMAM), 76 to 98 (WLLR…MHIA), 113 to 133 (VWIV…LGYC), and 179 to 199 (FFAL…MHFM). Heme b-binding residues include His-82 and His-96. Residues His-183 and His-197 each contribute to the heme b site. His-202 is a binding site for a ubiquinone. A run of 4 helical transmembrane segments spans residues 225–245 (FIFK…LFVF), 289–309 (LLGV…PITD), 321–341 (LSKF…QIGQ), and 348–368 (FVLM…IIVP).

The protein belongs to the cytochrome b family. Fungal cytochrome b-c1 complex contains 10 subunits; 3 respiratory subunits, 2 core proteins and 5 low-molecular weight proteins. Cytochrome b-c1 complex is a homodimer. The cofactor is heme b.

It localises to the mitochondrion inner membrane. Functionally, component of the ubiquinol-cytochrome c reductase complex (complex III or cytochrome b-c1 complex) that is part of the mitochondrial respiratory chain. The b-c1 complex mediates electron transfer from ubiquinol to cytochrome c. Contributes to the generation of a proton gradient across the mitochondrial membrane that is then used for ATP synthesis. This is Cytochrome b (COB) from Candida glabrata (strain ATCC 2001 / BCRC 20586 / JCM 3761 / NBRC 0622 / NRRL Y-65 / CBS 138) (Yeast).